A 118-amino-acid chain; its full sequence is Large ribosomal subunit protein uL18 (118 aa).

It belongs to the universal ribosomal protein uL18 family. Part of the 50S ribosomal subunit; part of the 5S rRNA/L5/L18/L25 subcomplex. Contacts the 5S and 23S rRNAs.

Functionally, this is one of the proteins that bind and probably mediate the attachment of the 5S RNA into the large ribosomal subunit, where it forms part of the central protuberance. This Acidobacterium capsulatum (strain ATCC 51196 / DSM 11244 / BCRC 80197 / JCM 7670 / NBRC 15755 / NCIMB 13165 / 161) protein is Large ribosomal subunit protein uL18.